Reading from the N-terminus, the 384-residue chain is Oxoeicosanoid receptor 1 (384 aa).

A disordered region spans residues 1–21; it reads MELHNLSSPSPSLSSSVLPPS. Over 1–58 the chain is Extracellular; that stretch reads MELHNLSSPSPSLSSSVLPPSFSPSPSSAPSAFTTVGGSSGGPCHPTSSSLVSAFLAP. The N-linked (GlcNAc...) asparagine glycan is linked to Asn-5. Low complexity predominate over residues 7–21; that stretch reads SSPSPSLSSSVLPPS. A helical membrane pass occupies residues 59-79; the sequence is ILALEFVLGLVGNSLALFIFC. Residues 80 to 87 lie on the Cytoplasmic side of the membrane; that stretch reads IHTRPWTS. A helical membrane pass occupies residues 88 to 108; the sequence is NTVFLVSLVAADFLLISNLPL. The Extracellular segment spans residues 109 to 129; it reads RVDYYLLHETWRFGAAACKVN. Cys-126 and Cys-198 are oxidised to a cystine. Residues 130–152 form a helical membrane-spanning segment; that stretch reads LFMLSTNRTASVVFLTAIALNRY. At 153-172 the chain is on the cytoplasmic side; sequence LKVVQPHHVLSRASVGAAAR. Residues 173 to 193 traverse the membrane as a helical segment; the sequence is VAGGLWVGILLLNGHLLLSTF. Over 194–215 the chain is Extracellular; the sequence is SGPSCLSYRVGTKPSASLRWHQ. The chain crosses the membrane as a helical span at residues 216–236; the sequence is ALYLLEFFLPLALILFAIVSI. The Cytoplasmic portion of the chain corresponds to 237-256; it reads GLTIRNRGLGGQAGPQRAMR. A helical transmembrane segment spans residues 257–277; it reads VLAMVVAVYTICFLPSIIFGM. Topologically, residues 278–297 are extracellular; sequence ASMVAFWLSACRSLDLCTQL. A helical membrane pass occupies residues 298-318; it reads FHGSLAFTYLNSVLDPVLYCF. Topologically, residues 319–384 are cytoplasmic; that stretch reads SSPNFLHQSR…SLEKEGSSQG (66 aa).

It belongs to the G-protein coupled receptor 1 family. As to expression, expressed in various tissues except brain. Expression is more intense in liver, kidney, peripheral leukocyte, lung, and spleen than in other tissues. Highly expressed in eosinophils, neutrophils, and lung macrophages.

The protein localises to the membrane. Its function is as follows. Receptor for eicosanoids and polyunsaturated fatty acids such as 5-oxo-6E,8Z,11Z,14Z-eicosatetraenoic acid (5-OXO-ETE), 5(S)-hydroperoxy-6E,8Z,11Z,14Z-eicosatetraenoic acid (5(S)-HPETE) and arachidonic acid. Seems to be coupled to the G(i)/G(o), families of heteromeric G proteins. The protein is Oxoeicosanoid receptor 1 (OXER1) of Homo sapiens (Human).